Here is a 541-residue protein sequence, read N- to C-terminus: MKRNRWWIILLLFLVFLPKTSFAHAYIVKSSPGENSELKSAPAQVEIEFNEPVEEGFHYIKVYNSNGDRVDTDKTEIKKDNHHIMTVKLKKNLPKDVYRAEWNAVSADGHPVSGVIPFSIGKADGGFSSQKAADSALNPGTAADRAILYTALSLFIGTVFFHLFWYKGKSEQLVKRTRRILTGSIAALGLALLLQLPIQTKANAGGGWGSAFQPGYIRETLFETAGGSIWIIQAALFVLLALSVIPAIRKNRFSSFGYWTAPLIFFFGLLLAKAFTGHAAVVEEKTVGILMDFLHLTSASIWVGGIAALVLLLSKEWRQPDKTLAWETVRRFSPWALTAVGVILFSGLLNGFFIIRSMDSLFHTAYGQALLVKSGLFVFMLVLGAIHFLLTRKQRRTGISRTLKAEWAIGIAVLITAAVFTSLPSPPEPAPEPFYQTKAIENGQSVSLSISPNQPGKNVFELRVTDHNGDPVKNIQQITLTVYKTGLSGSENKSTFTLKEKTKGVFQDQNLSINEKGNWKIKVHGLTGDFNEINIMFTKTN.

Residues 1–25 (MKRNRWWIILLLFLVFLPKTSFAHA) form the signal peptide. 2 residues coordinate Cu cation: histidine 24 and histidine 110. 8 helical membrane-spanning segments follow: residues 146–166 (AILYTALSLFIGTVFFHLFWY), 180–200 (ILTGSIAALGLALLLQLPIQT), 228–248 (SIWIIQAALFVLLALSVIPAI), 262–282 (PLIFFFGLLLAKAFTGHAAVV), 293–313 (FLHLTSASIWVGGIAALVLLL), 335–355 (WALTAVGVILFSGLLNGFFII), 370–390 (LLVKSGLFVFMLVLGAIHFLL), and 407–427 (WAIGIAVLITAAVFTSLPSPP).

It in the N-terminal section; belongs to the CopC family. This sequence in the C-terminal section; belongs to the CopD family.

It is found in the cell membrane. Functionally, involved in uptake of extracellular oxidized copper under copper-limiting conditions. The sequence is that of Copper transport protein CutJ from Bacillus subtilis (strain 168).